A 380-amino-acid chain; its full sequence is Chaperone protein DnaJ (380 aa).

The J domain maps to aspartate 5–glycine 70. The segment at glycine 137–histidine 215 adopts a CR-type zinc-finger fold. The Zn(2+) site is built by cysteine 150, cysteine 153, cysteine 167, cysteine 170, cysteine 189, cysteine 192, cysteine 203, and cysteine 206. CXXCXGXG motif repeat units lie at residues cysteine 150 to glycine 157, cysteine 167 to glycine 174, cysteine 189 to glycine 196, and cysteine 203 to glycine 210. A disordered region spans residues isoleucine 222 to proline 247.

Belongs to the DnaJ family. In terms of assembly, homodimer. Zn(2+) is required as a cofactor.

The protein resides in the cytoplasm. Participates actively in the response to hyperosmotic and heat shock by preventing the aggregation of stress-denatured proteins and by disaggregating proteins, also in an autonomous, DnaK-independent fashion. Unfolded proteins bind initially to DnaJ; upon interaction with the DnaJ-bound protein, DnaK hydrolyzes its bound ATP, resulting in the formation of a stable complex. GrpE releases ADP from DnaK; ATP binding to DnaK triggers the release of the substrate protein, thus completing the reaction cycle. Several rounds of ATP-dependent interactions between DnaJ, DnaK and GrpE are required for fully efficient folding. Also involved, together with DnaK and GrpE, in the DNA replication of plasmids through activation of initiation proteins. This is Chaperone protein DnaJ from Nitrosococcus oceani (strain ATCC 19707 / BCRC 17464 / JCM 30415 / NCIMB 11848 / C-107).